Here is a 665-residue protein sequence, read N- to C-terminus: RNA-directed RNA polymerase (665 aa).

The region spanning 310–485 is the RdRp catalytic domain; the sequence is NKEEKVKEWS…LKEGKVNPSP (176 aa). Residues aspartate 454, tyrosine 491, and glycine 495 each coordinate Mg(2+).

In terms of assembly, part of the packaging complex composed of RDRP, P4 and P7. Interacts with P7. Requires Mg(2+) as cofactor. Mn(2+) serves as cofactor.

It is found in the virion. The catalysed reaction is RNA(n) + a ribonucleoside 5'-triphosphate = RNA(n+1) + diphosphate. Functionally, rna-dependent RNA polymerase part of the packaging complex that packages the viral RNA segments, replicate them into a double-stranded form and transcribe them. The sequence is that of RNA-directed RNA polymerase (P2) from Pseudomonas phage phi6 (Bacteriophage phi-6).